A 489-amino-acid polypeptide reads, in one-letter code: Glucose-6-phosphate 1-dehydrogenase (489 aa).

NADP(+)-binding positions include 15-22 (GATGDLAK), Arg49, 86-87 (DV), and Lys149. His179, Lys183, Glu217, and Asp236 together coordinate substrate. The Proton acceptor role is filled by His241. Positions 341 and 346 each coordinate substrate.

It belongs to the glucose-6-phosphate dehydrogenase family.

The enzyme catalyses D-glucose 6-phosphate + NADP(+) = 6-phospho-D-glucono-1,5-lactone + NADPH + H(+). Its pathway is carbohydrate degradation; pentose phosphate pathway; D-ribulose 5-phosphate from D-glucose 6-phosphate (oxidative stage): step 1/3. Its function is as follows. Catalyzes the oxidation of glucose 6-phosphate to 6-phosphogluconolactone. The protein is Glucose-6-phosphate 1-dehydrogenase of Bacillus subtilis (strain 168).